Reading from the N-terminus, the 339-residue chain is Ketol-acid reductoisomerase (NADP(+)) (339 aa).

The KARI N-terminal Rossmann domain occupies 1 to 182; the sequence is MPNRYYEKDG…GCLKAGVIDT (182 aa). Residues 25-28, Ser-51, Ser-53, and 83-86 contribute to the NADP(+) site; these read YGSQ and DHIQ. Residue His-108 is part of the active site. Gly-134 lines the NADP(+) pocket. One can recognise a KARI C-terminal knotted domain in the interval 183–328; that stretch reads NFREETESDL…RELREMMTFL (146 aa). Residues Asp-191, Glu-195, Glu-227, and Glu-231 each contribute to the Mg(2+) site. Ser-252 lines the substrate pocket.

It belongs to the ketol-acid reductoisomerase family. The cofactor is Mg(2+).

It carries out the reaction (2R)-2,3-dihydroxy-3-methylbutanoate + NADP(+) = (2S)-2-acetolactate + NADPH + H(+). The catalysed reaction is (2R,3R)-2,3-dihydroxy-3-methylpentanoate + NADP(+) = (S)-2-ethyl-2-hydroxy-3-oxobutanoate + NADPH + H(+). Its pathway is amino-acid biosynthesis; L-isoleucine biosynthesis; L-isoleucine from 2-oxobutanoate: step 2/4. It participates in amino-acid biosynthesis; L-valine biosynthesis; L-valine from pyruvate: step 2/4. Functionally, involved in the biosynthesis of branched-chain amino acids (BCAA). Catalyzes an alkyl-migration followed by a ketol-acid reduction of (S)-2-acetolactate (S2AL) to yield (R)-2,3-dihydroxy-isovalerate. In the isomerase reaction, S2AL is rearranged via a Mg-dependent methyl migration to produce 3-hydroxy-3-methyl-2-ketobutyrate (HMKB). In the reductase reaction, this 2-ketoacid undergoes a metal-dependent reduction by NADPH to yield (R)-2,3-dihydroxy-isovalerate. This is Ketol-acid reductoisomerase (NADP(+)) from Solibacter usitatus (strain Ellin6076).